We begin with the raw amino-acid sequence, 399 residues long: Forkhead box protein A4 (399 aa).

Positions 119-213 (KPPYSYISLI…ENGCYLRRQK (95 aa)) form a DNA-binding region, fork-head. Basic and acidic residues predominate over residues 219–234 (RSKSGEREKKVNKPGD). Residues 219–290 (RSKSGEREKK…VGLSPTSEQA (72 aa)) are disordered. The segment covering 267-277 (STGSSIHQASG) has biased composition (polar residues).

It localises to the nucleus. Functionally, transcriptional repressor involved in embryonic nervous system development. Plays a role in the induction and patterning of the anterior-posterior neural axis. Involved in the establishment of floor plate differentiation from neural plate cells during gastrulation. Binds the anf1 promoter sequence to restrict expression of anf1 to the anterior of the neural plate, thereby patterning the forebrain. Can bind to the HNF-3-alpha DNA target sequence. Cooperates with t/bra in a dose-dependent manner to specify dorsal mesoderm formation, including notochord. May be involved in the dorso-ventral patterning of the mesoderm. Binds to DNA via the target sequence 5'-[GA]TAAA[TC]A-3', with 5'-GTAAATA-3' being the preferred binding site. In Xenopus tropicalis (Western clawed frog), this protein is Forkhead box protein A4.